The sequence spans 176 residues: MSITMRQKDLRPAPALIEYKGMKFLITDRPSDITINHYIMELKKNNVNTVVRVCEPSYNTDELETQGITVKDLAFEDGTFPPQQVVDEWFEVLKDKYQQNPEACVAVHCVAGLGRAPVLVALALIELGLKYEAAVEMIRDKRRGAINAKQLSFLEKYKPKARLKHKNGHKNSCSVQ.

Residues 13–166 (APALIEYKGM…YKPKARLKHK (154 aa)) form the Tyrosine-protein phosphatase domain. The active-site Phosphocysteine intermediate is cysteine 109. Residue cysteine 173 is modified to Cysteine methyl ester. A lipid anchor (S-farnesyl cysteine) is attached at cysteine 173. The propeptide at 174–176 (SVQ) is removed in mature form.

It belongs to the protein-tyrosine phosphatase family. In terms of assembly, homotrimer. Interacts with uex, possibly at the plasma membrane. In terms of tissue distribution, expressed in the adult head (at protein level). Expressed in neurons in the antennal lobe and V-glomeruli (at protein level). Expressed in dorsocentral neurons (at protein level).

The protein localises to the cytoplasm. It localises to the cell membrane. Its subcellular location is the apicolateral cell membrane. The protein resides in the cell projection. It is found in the axon. It carries out the reaction O-phospho-L-tyrosyl-[protein] + H2O = L-tyrosyl-[protein] + phosphate. In terms of biological role, probable phosphatase. Inhibits growth possibly by negatively regulating Src64B-induced growth. Regulates central nervous system circuit formation and stabilization of synapse-dense terminal arbors. In dorsocentral neurons, regulates synaptogenesis in terminal arbors via modulation of the insulin receptor pathway, likely upstream of Akt1, and via reduction of PtdIns(4,5)P2 (Phosphatidylinositol 4,5-bisphosphate) levels. In the nervous system, plays a protective role together with uex in response to olfactory carbon dioxide stimulation. In Drosophila melanogaster (Fruit fly), this protein is PRL-1 phosphatase.